Here is a 154-residue protein sequence, read N- to C-terminus: Keratin-associated protein 9-4 (154 aa).

15 repeat units span residues 8–12 (CCQPT), 13–17 (CCRTT), 18–22 (CCRTT), 37–41 (CCQPS), 42–46 (CCVSS), 51–55 (CCRPT), 56–60 (CCQNT), 61–65 (CCQPT), 70–74 (CCQPS), 75–79 (CCSTP), 80–84 (CCQPT), 85–89 (CCGSS), 129–133 (CCRPA), 134–138 (CCETT), and 148–152 (CCQPF). Residues 8–152 (CCQPTCCRTT…TCVSSCCQPF (145 aa)) are 15 X 5 AA repeats of C-C-[RQVGE]-[SPTN]-[TASPF].

The protein belongs to the KRTAP type 9 family. Interacts with hair keratins.

Functionally, in the hair cortex, hair keratin intermediate filaments are embedded in an interfilamentous matrix, consisting of hair keratin-associated proteins (KRTAP), which are essential for the formation of a rigid and resistant hair shaft through their extensive disulfide bond cross-linking with abundant cysteine residues of hair keratins. The matrix proteins include the high-sulfur and high-glycine-tyrosine keratins. This is Keratin-associated protein 9-4 (KRTAP9-4) from Homo sapiens (Human).